A 311-amino-acid chain; its full sequence is Malate dehydrogenase (311 aa).

NAD(+) is bound by residues 7 to 13 (GAAGGIG) and D34. Substrate contacts are provided by R81 and R87. NAD(+) is bound by residues N94 and 117-119 (ITN). Positions 119 and 153 each coordinate substrate. The Proton acceptor role is filled by H177. M227 lines the NAD(+) pocket.

Belongs to the LDH/MDH superfamily. MDH type 1 family. In terms of assembly, homodimer.

The enzyme catalyses (S)-malate + NAD(+) = oxaloacetate + NADH + H(+). Its function is as follows. Catalyzes the reversible oxidation of malate to oxaloacetate. The polypeptide is Malate dehydrogenase (Shewanella sp. (strain MR-4)).